The chain runs to 188 residues: MSIKSDKWIRRMAEQHGMIEPFEPGQIRQQDGRKIISYGTSSYGYDIRCAREFKVFTNIHSTVVDPKNFDEKSFVDFEGDYCIIPPNSFALARTVEYFRIPRDVLTVCLGKSTYARCGIIVNVTPFEPEWEGYVTLEFSNTTPLPAKIYAGEGCAQVLFFQGDEECAVSYKDRNGKYQGQHGVTLPKA.

Residues 111–116, 135–137, Q156, Y170, and Q180 each bind dCTP; these read KSTYAR and TLE. The active-site Proton donor/acceptor is the E137.

It belongs to the dCTP deaminase family. As to quaternary structure, homotrimer.

The catalysed reaction is dCTP + H2O + H(+) = dUTP + NH4(+). Its pathway is pyrimidine metabolism; dUMP biosynthesis; dUMP from dCTP (dUTP route): step 1/2. Catalyzes the deamination of dCTP to dUTP. This chain is dCTP deaminase, found in Acidovorax sp. (strain JS42).